The following is a 542-amino-acid chain: Apolipoprotein N-acyltransferase (542 aa).

6 helical membrane passes run 24–44, 54–74, 85–105, 116–136, 160–180, and 190–210; these read VVASVVSCICGYSLLWAGLFA, VWCIAFIWTWTVEGAHFSWML, FVWGILLSYLATLFASFSCLV, ALVWLPGVWVAIEAIRYYGLL, FFGWAGQSFLVIAANICCFAV, and GLWLTLCAFPYLLGGAHYEYL. The CN hydrolase domain maps to 220 to 499; the sequence is LRVAIVQPGY…TGVLQVSVPL (280 aa). E264 acts as the Proton acceptor in catalysis. K349 is a catalytic residue. Residue C404 is the Nucleophile of the active site. A helical membrane pass occupies residues 509 to 529; that stretch reads LGDAPLLLIAVCSVIGAIAYF.

This sequence belongs to the CN hydrolase family. Apolipoprotein N-acyltransferase subfamily.

The protein resides in the cell inner membrane. The catalysed reaction is N-terminal S-1,2-diacyl-sn-glyceryl-L-cysteinyl-[lipoprotein] + a glycerophospholipid = N-acyl-S-1,2-diacyl-sn-glyceryl-L-cysteinyl-[lipoprotein] + a 2-acyl-sn-glycero-3-phospholipid + H(+). It functions in the pathway protein modification; lipoprotein biosynthesis (N-acyl transfer). In terms of biological role, catalyzes the phospholipid dependent N-acylation of the N-terminal cysteine of apolipoprotein, the last step in lipoprotein maturation. The chain is Apolipoprotein N-acyltransferase from Chlamydia trachomatis serovar D (strain ATCC VR-885 / DSM 19411 / UW-3/Cx).